The chain runs to 435 residues: Xylose isomerase (435 aa).

Catalysis depends on residues His100 and Asp103. Mg(2+) is bound by residues Glu231, Glu267, His270, Asp295, Asp306, Asp308, and Asp338.

The protein belongs to the xylose isomerase family. As to quaternary structure, homotetramer. Mg(2+) serves as cofactor.

The protein localises to the cytoplasm. It carries out the reaction alpha-D-xylose = alpha-D-xylulofuranose. The protein is Xylose isomerase of Brucella suis (strain ATCC 23445 / NCTC 10510).